We begin with the raw amino-acid sequence, 85 residues long: uncharacterized protein (85 aa).

Belongs to the BolA/IbaG family.

This is an uncharacterized protein from Haemophilus influenzae (strain ATCC 51907 / DSM 11121 / KW20 / Rd).